A 788-amino-acid polypeptide reads, in one-letter code: Xylulose-5-phosphate phosphoketolase (788 aa).

This sequence belongs to the XFP family. As to quaternary structure, homohexamer. It depends on thiamine diphosphate as a cofactor.

It carries out the reaction D-xylulose 5-phosphate + phosphate = acetyl phosphate + D-glyceraldehyde 3-phosphate + H2O. The sequence is that of Xylulose-5-phosphate phosphoketolase (xpkA) from Lactiplantibacillus pentosus (Lactobacillus pentosus).